A 196-amino-acid polypeptide reads, in one-letter code: Macrophage infectivity potentiator (196 aa).

A signal peptide spans 1–29 (MHRENYFSKIAFCLLGVLFLSCITSVQTV). The region spanning 85-171 (DDKCEVHYTG…EFDVELISIK (87 aa)) is the PPIase FKBP-type domain.

This sequence belongs to the FKBP-type PPIase family.

Its subcellular location is the secreted. The protein resides in the extracellular space. The catalysed reaction is [protein]-peptidylproline (omega=180) = [protein]-peptidylproline (omega=0). With respect to regulation, strongly inhibited by FK506 and L-685,818. Functionally, essential virulence factor associated with macrophage infectivity. Exhibits PPIase activity. This is Macrophage infectivity potentiator (MIP) from Trypanosoma cruzi.